The sequence spans 419 residues: UDP-N-acetylglucosamine 1-carboxyvinyltransferase (419 aa).

Lysine 22 to asparagine 23 contributes to the phosphoenolpyruvate binding site. UDP-N-acetyl-alpha-D-glucosamine is bound at residue arginine 91. Cysteine 115 serves as the catalytic Proton donor. Cysteine 115 carries the 2-(S-cysteinyl)pyruvic acid O-phosphothioketal modification. UDP-N-acetyl-alpha-D-glucosamine contacts are provided by residues arginine 120–leucine 124, lysine 160–valine 163, aspartate 305, and isoleucine 327.

This sequence belongs to the EPSP synthase family. MurA subfamily.

It localises to the cytoplasm. The enzyme catalyses phosphoenolpyruvate + UDP-N-acetyl-alpha-D-glucosamine = UDP-N-acetyl-3-O-(1-carboxyvinyl)-alpha-D-glucosamine + phosphate. The protein operates within cell wall biogenesis; peptidoglycan biosynthesis. Cell wall formation. Adds enolpyruvyl to UDP-N-acetylglucosamine. The protein is UDP-N-acetylglucosamine 1-carboxyvinyltransferase of Klebsiella pneumoniae subsp. pneumoniae (strain ATCC 700721 / MGH 78578).